We begin with the raw amino-acid sequence, 219 residues long: MKDNDIKRLLYTHLLCIFSIILSVFIPSLFLENFSILETHLTWLCICSGFVTAVNLVLYLVVKPNTSSKRSSLSHKVTGFLKCCIYFLMSCFSFHVIFVLYGAPLIELALETFLFAVILSTFTTVPCLCLLGPNLKAWLRVFSRNGVTSIWENSLQITTISSFVGAWLGALPIPLDWERPWQVWPISCTLGATFGYVAGLVISPLWIYWNRKQLTYKNN.

A run of 6 helical transmembrane segments spans residues 11-31 (YTHL…SLFL), 42-62 (TWLC…YLVV), 86-106 (YFLM…APLI), 113-133 (FLFA…LLGP), 155-175 (LQIT…PIPL), and 189-209 (TLGA…WIYW).

The protein belongs to the PIGF family. Part of the ethanolamine phosphate transferase 3 complex composed by PIGO and PIGF. Part of the ethanolamine phosphate transferase 2 complex with PIGG. PIGF is required to stabilize PIGG and PIGO.

It localises to the endoplasmic reticulum membrane. Its pathway is glycolipid biosynthesis; glycosylphosphatidylinositol-anchor biosynthesis. Its function is as follows. Stabilizing subunit of the ethanolamine phosphate transferase 3 and ethanolamine phosphate transferase 2 complexes that sequentially transfer an ethanolamine phosphate (EtNP) from a phosphatidylethanolamine (PE) to the 6-OH position of the third alpha-1,2-linked mannose and the second alpha-1,6-linked mannose of the alpha-D-Man-(1-&gt;2)-alpha-D-Man-(1-&gt;6)-2-PEtn-alpha-D-Man-(1-&gt;4)-alpha-D-GlcN-(1-&gt;6)-(1-radyl,2-acyl-sn-glycero-3-phospho)-2-acyl-inositol (also termed H6) intermediate to generate a 6-PEtn-alpha-D-Man-(1-&gt;2)-6-PEtn-alpha-D-Man-(1-&gt;6)-2-PEtn-alpha-D-Man-(1-&gt;4)-alpha-D-GlcN-(1-&gt;6)-(1-radyl,2-acyl-sn-glycero-3-phospho)-2-acyl-inositol (also termed H8). Participates in the tenth and eleventh steps of the glycosylphosphatidylinositol-anchor biosynthesis, in association with PIGO and PIGG, respectively. In Homo sapiens (Human), this protein is GPI ethanolamine phosphate transferase, stabilizing subunit.